A 374-amino-acid chain; its full sequence is Tuliposide A-converting enzyme b2, amyloplastic (374 aa).

Residues 1–68 (MSVALFCGPP…TNSSLSPSPT (68 aa)) constitute an amyloplast transit peptide. Catalysis depends on Ser-226, which acts as the Acyl-ester intermediate. Catalysis depends on charge relay system residues Asp-316 and His-348.

Belongs to the AB hydrolase superfamily. In terms of assembly, homodimer. In terms of tissue distribution, highly expressed in pistil and bulb scales. Lower expression in stem, and barely detected in root, leaf, petal and stamen.

It is found in the plastid. The protein resides in the amyloplast. It catalyses the reaction 6-tuliposide A = tulipalin A + D-glucose. Lactone-forming carboxylesterases, specifically catalyzing intramolecular transesterification, but not hydrolysis. Involved in the biosynthesis of tulipalins, defensive chemicals that show antimicrobial activities against a broad range of strains of bacteria and fungi. Substrates are 6-tuliposide A &gt; 6-tuliposide B. The protein is Tuliposide A-converting enzyme b2, amyloplastic (TCEA-B2) of Tulipa gesneriana (Garden tulip).